The chain runs to 1224 residues: Probable serine/threonine-protein kinase DDB_G0292350 (1224 aa).

Disordered regions lie at residues 57 to 98 (MSGS…STQR) and 252 to 284 (SSPSSSSSSIKTKNTTSTTTTTTTTKNLNDISN). Composition is skewed to low complexity over residues 58-74 (SGSIQSDLSSSDNFTSS) and 83-95 (SSSNTSNRNSDNS). 2 coiled-coil regions span residues 352–381 (LFKQQEKQHQQQQQQQQNQQDKEKFEKQNN) and 540–569 (DVQLSTKLNDEEETIEKEEEDLNSVDEYLT). Disordered regions lie at residues 693-784 (QPIP…FVIT) and 815-836 (FTNNNNNNNGGSTITTTTTNNI). Over residues 743-768 (NNNNNNNNNINNNNINNNNINNNKNG) the composition is skewed to low complexity. The span at 772–784 (GETPSPSSSFVIT) shows a compositional bias: polar residues. A Protein kinase domain is found at 935–1193 (FRDKIKLGTG…PEMLLHHTFL (259 aa)). ATP is bound by residues 941 to 949 (LGTGAFGNV) and Lys-964. Asp-1063 serves as the catalytic Proton acceptor.

It belongs to the protein kinase superfamily. Ser/Thr protein kinase family. The cofactor is Mg(2+).

The catalysed reaction is L-seryl-[protein] + ATP = O-phospho-L-seryl-[protein] + ADP + H(+). It carries out the reaction L-threonyl-[protein] + ATP = O-phospho-L-threonyl-[protein] + ADP + H(+). The polypeptide is Probable serine/threonine-protein kinase DDB_G0292350 (Dictyostelium discoideum (Social amoeba)).